The chain runs to 86 residues: Large ribosomal subunit protein bL31B (86 aa).

This sequence belongs to the bacterial ribosomal protein bL31 family. Type B subfamily. As to quaternary structure, part of the 50S ribosomal subunit.

The polypeptide is Large ribosomal subunit protein bL31B (Vibrio campbellii (strain ATCC BAA-1116)).